The chain runs to 97 residues: Aspartyl/glutamyl-tRNA(Asn/Gln) amidotransferase subunit C (97 aa).

It belongs to the GatC family. In terms of assembly, heterotrimer of A, B and C subunits.

The catalysed reaction is L-glutamyl-tRNA(Gln) + L-glutamine + ATP + H2O = L-glutaminyl-tRNA(Gln) + L-glutamate + ADP + phosphate + H(+). The enzyme catalyses L-aspartyl-tRNA(Asn) + L-glutamine + ATP + H2O = L-asparaginyl-tRNA(Asn) + L-glutamate + ADP + phosphate + 2 H(+). Allows the formation of correctly charged Asn-tRNA(Asn) or Gln-tRNA(Gln) through the transamidation of misacylated Asp-tRNA(Asn) or Glu-tRNA(Gln) in organisms which lack either or both of asparaginyl-tRNA or glutaminyl-tRNA synthetases. The reaction takes place in the presence of glutamine and ATP through an activated phospho-Asp-tRNA(Asn) or phospho-Glu-tRNA(Gln). The protein is Aspartyl/glutamyl-tRNA(Asn/Gln) amidotransferase subunit C of Clostridium botulinum (strain Eklund 17B / Type B).